The sequence spans 115 residues: Allergen Tha p 2 (115 aa).

An N-terminal signal peptide occupies residues 1 to 15 (MKLLIFAILIALSSS).

In Thaumetopoea pityocampa (Pine processionary moth), this protein is Allergen Tha p 2.